Consider the following 724-residue polypeptide: MADHLILSLQAPPFLIFPCSLHRSWRFPGGIRYSVPEFRLSSQLQLANSISPSKSSASSSSPPENSAPEKFDLVSSTQLKDGSHVFRFGDASEIEKYLEAEEKARCVEVETQNAKIAEEASEVSRKQKKLVSSIIETSTEKEETAAPSDLSNVIKIKDRKRVRSPTKKKKETVNVSRSEDKIDAKSASVSNLSSIVSVAEAIPISSTEEEAVVEKEITAKSYNVEPLSSEAMKKVSVNKIGDCETNGYQENRMEVQARPSLSTQQEITPVSTIEIDDNLDVTEKPIEAEENLVAEPTATDDLSPDELLSTSEATHRSVDEIAQKPVIDTSEENLLNTFEAEENPVVEPTATAAVSSDELISTSEATRHSVDEIAQKPIIDTSEKNPMETFVEPEAVHSSVDESTEKLVVVTSDVENDGENVASTTEDEITVRDTITDSGSISNNDDTKVEDLQLPVPETASLEPIKAASGREELVSKAFYLDSGFASLQSPFKALAGREDAYFISHHNWIGIADGVSQWSFEGINKGMYAQELMSNCEKIISNETAKISDPVQVLHRSVNETKSSGSSTALIAHLDNNELHIANIGDSGFMVIRDGTVLQNSSPMFHHFCFPLHITQGCDVLKLAEVYHVNLEEGDVVIAATDGLFDNLYEKEIVSIVCGSLKQSLEPQKIAELVAAKAQEVGRSKTERTPFADAAKEEGYNGHKGGKLDAVTVIISFVKIVST.

The tract at residues 357-385 is disordered; the sequence is DELISTSEATRHSVDEIAQKPIIDTSEKN. A compositionally biased stretch (basic and acidic residues) spans 365 to 374; it reads ATRHSVDEIA. The 238-residue stretch at 482-719 folds into the PPM-type phosphatase domain; the sequence is DSGFASLQSP…DAVTVIISFV (238 aa). Positions 514, 515, 643, and 710 each coordinate Mn(2+).

Belongs to the PP2C family. Requires Mg(2+) as cofactor. Mn(2+) is required as a cofactor.

It carries out the reaction O-phospho-L-seryl-[protein] + H2O = L-seryl-[protein] + phosphate. It catalyses the reaction O-phospho-L-threonyl-[protein] + H2O = L-threonyl-[protein] + phosphate. The chain is Probable protein phosphatase 2C 62 from Arabidopsis thaliana (Mouse-ear cress).